Reading from the N-terminus, the 297-residue chain is Ribonuclease HIII (297 aa).

One can recognise an RNase H type-2 domain in the interval 81 to 297 (IPIIGTDEVG…NTKKAQALLK (217 aa)). Residues Asp87, Glu88, and Asp192 each coordinate a divalent metal cation.

This sequence belongs to the RNase HII family. RnhC subfamily. Requires Mn(2+) as cofactor. It depends on Mg(2+) as a cofactor.

It localises to the cytoplasm. The enzyme catalyses Endonucleolytic cleavage to 5'-phosphomonoester.. Functionally, endonuclease that specifically degrades the RNA of RNA-DNA hybrids. This is Ribonuclease HIII from Streptococcus agalactiae serotype Ia (strain ATCC 27591 / A909 / CDC SS700).